The chain runs to 445 residues: Argininosuccinate synthase (445 aa).

ATP-binding positions include Ala-17 to Ser-25 and Ala-43. Tyr-99 serves as a coordination point for L-citrulline. Residues Gly-129 and Thr-131 each coordinate ATP. 3 residues coordinate L-aspartate: Thr-131, Asn-135, and Asp-136. Asn-135 lines the L-citrulline pocket. Asp-136 provides a ligand contact to ATP. L-citrulline is bound by residues Arg-139 and Ser-192. ATP is bound at residue Asp-194. L-citrulline is bound by residues Thr-201, Glu-203, and Glu-280.

The protein belongs to the argininosuccinate synthase family. Type 2 subfamily. In terms of assembly, homotetramer.

It localises to the cytoplasm. The catalysed reaction is L-citrulline + L-aspartate + ATP = 2-(N(omega)-L-arginino)succinate + AMP + diphosphate + H(+). Its pathway is amino-acid biosynthesis; L-arginine biosynthesis; L-arginine from L-ornithine and carbamoyl phosphate: step 2/3. The polypeptide is Argininosuccinate synthase (argG) (Bradyrhizobium diazoefficiens (strain JCM 10833 / BCRC 13528 / IAM 13628 / NBRC 14792 / USDA 110)).